We begin with the raw amino-acid sequence, 345 residues long: Heat-inducible transcription repressor HrcA (345 aa).

Belongs to the HrcA family.

Functionally, negative regulator of class I heat shock genes (grpE-dnaK-dnaJ and groELS operons). Prevents heat-shock induction of these operons. The protein is Heat-inducible transcription repressor HrcA of Dehalococcoides mccartyi (strain ATCC BAA-2266 / KCTC 15142 / 195) (Dehalococcoides ethenogenes (strain 195)).